The chain runs to 237 residues: UPF0053 protein HI_0056 (237 aa).

The next 7 membrane-spanning stretches (helical) occupy residues isoleucine 12–isoleucine 32, isoleucine 49–isoleucine 69, isoleucine 90–isoleucine 110, tyrosine 126–isoleucine 146, methionine 151–phenylalanine 171, isoleucine 188–isoleucine 208, and isoleucine 210–isoleucine 230.

It belongs to the UPF0053 family.

It is found in the cell membrane. The polypeptide is UPF0053 protein HI_0056 (Haemophilus influenzae (strain ATCC 51907 / DSM 11121 / KW20 / Rd)).